We begin with the raw amino-acid sequence, 611 residues long: UvrABC system protein C (611 aa).

The 79-residue stretch at 19–97 (QRPGVYRMVD…IKELRPRYNV (79 aa)) folds into the GIY-YIG domain. The UVR domain occupies 207–242 (NQVIEELGARMEAASERLEFEAAAQYRDRIQALQAV).

This sequence belongs to the UvrC family. In terms of assembly, interacts with UvrB in an incision complex.

The protein localises to the cytoplasm. Its function is as follows. The UvrABC repair system catalyzes the recognition and processing of DNA lesions. UvrC both incises the 5' and 3' sides of the lesion. The N-terminal half is responsible for the 3' incision and the C-terminal half is responsible for the 5' incision. The protein is UvrABC system protein C of Alkalilimnicola ehrlichii (strain ATCC BAA-1101 / DSM 17681 / MLHE-1).